The primary structure comprises 150 residues: Transcription antitermination protein NusB (150 aa).

Belongs to the NusB family.

Involved in transcription antitermination. Required for transcription of ribosomal RNA (rRNA) genes. Binds specifically to the boxA antiterminator sequence of the ribosomal RNA (rrn) operons. This Saccharophagus degradans (strain 2-40 / ATCC 43961 / DSM 17024) protein is Transcription antitermination protein NusB.